The sequence spans 266 residues: Agamous-like MADS-box protein AGL97 (266 aa).

One can recognise an MADS-box domain in the interval 3 to 63 (GVKRKIAIEK…SNSNAAFYSF (61 aa)). A coiled-coil region spans residues 88 to 130 (WEDESLLKSENLEELREAMDSMSTMLRDLKELEKQRDHQTQTL).

As to quaternary structure, interacts with AGL27 and AGL62.

It localises to the nucleus. Its function is as follows. Putative transcription factor. The chain is Agamous-like MADS-box protein AGL97 (AGL97) from Arabidopsis thaliana (Mouse-ear cress).